A 262-amino-acid chain; its full sequence is Putative dimethyl sulfoxide reductase iron-sulfur subunit B (262 aa).

4Fe-4S ferredoxin-type domains lie at 4-34 (YGLVIDQERCIGCQSCSLTCKQENNVPMGQF), 62-93 (LEMTYQPTACQHCENAPCVKVCPVNATYTRDD), and 94-123 (GIVEIDYDKCMGCRYCMAACPYNARVFNWD). Cysteine 13, cysteine 16, cysteine 19, cysteine 23, cysteine 71, cysteine 74, cysteine 79, cysteine 83, cysteine 103, cysteine 106, cysteine 109, cysteine 113, cysteine 147, cysteine 150, cysteine 162, and cysteine 166 together coordinate [4Fe-4S] cluster. The tract at residues 209 to 262 (NGEMSPGRPWKSKKLESELDDDEAAKAARRRSGSVENGYDVTPHVPAETAGGDD) is disordered.

As to quaternary structure, probable multiprotein complex that likely consists of DmsA, DmsB and DmsC. [4Fe-4S] cluster serves as cofactor.

The protein resides in the cell membrane. In terms of biological role, dimethyl sulfoxide (DMSO) reductase catalyzes the reduction of dimethyl sulfoxide (DMSO) to dimethyl sulfide (DMS) during anaerobic respiration; it can also use trimethylamine N-oxide (TMAO) as terminal electron acceptor. Subunit B is proposed to be involved in electron transfer. The polypeptide is Putative dimethyl sulfoxide reductase iron-sulfur subunit B (dmsB) (Halobacterium salinarum (strain ATCC 700922 / JCM 11081 / NRC-1) (Halobacterium halobium)).